A 190-amino-acid polypeptide reads, in one-letter code: Hypoxanthine/guanine phosphoribosyltransferase (190 aa).

This sequence belongs to the purine/pyrimidine phosphoribosyltransferase family. Archaeal HPRT subfamily. Homodimer.

It localises to the cytoplasm. It catalyses the reaction IMP + diphosphate = hypoxanthine + 5-phospho-alpha-D-ribose 1-diphosphate. The catalysed reaction is GMP + diphosphate = guanine + 5-phospho-alpha-D-ribose 1-diphosphate. Its pathway is purine metabolism; IMP biosynthesis via salvage pathway; IMP from hypoxanthine: step 1/1. In terms of biological role, catalyzes a salvage reaction resulting in the formation of IMP that is energically less costly than de novo synthesis. This is Hypoxanthine/guanine phosphoribosyltransferase from Methanohalobium evestigatum (strain ATCC BAA-1072 / DSM 3721 / NBRC 107634 / OCM 161 / Z-7303).